Here is a 113-residue protein sequence, read N- to C-terminus: Ribonuclease P protein component (113 aa).

Belongs to the RnpA family. In terms of assembly, consists of a catalytic RNA component (M1 or rnpB) and a protein subunit.

It catalyses the reaction Endonucleolytic cleavage of RNA, removing 5'-extranucleotides from tRNA precursor.. Functionally, RNaseP catalyzes the removal of the 5'-leader sequence from pre-tRNA to produce the mature 5'-terminus. It can also cleave other RNA substrates such as 4.5S RNA. The protein component plays an auxiliary but essential role in vivo by binding to the 5'-leader sequence and broadening the substrate specificity of the ribozyme. The chain is Ribonuclease P protein component from Geotalea uraniireducens (strain Rf4) (Geobacter uraniireducens).